The chain runs to 86 residues: Cytochrome c oxidase subunit 3 (86 aa).

Over 1–15 (MAHQAHSYHMVDPSP) the chain is Mitochondrial matrix. The chain crosses the membrane as a helical span at residues 16 to 34 (WPIFGAAAALLTTSGLVMW). Topologically, residues 35 to 40 (FHYNSS) are mitochondrial intermembrane. A helical transmembrane segment spans residues 41 to 66 (ILLAAGLLSMLLVMLQWWREIVREST). At 67-86 (FQGHHTPTVQKGLRYGMILF) the chain is on the mitochondrial matrix side.

It belongs to the cytochrome c oxidase subunit 3 family. In terms of assembly, component of the cytochrome c oxidase (complex IV, CIV), a multisubunit enzyme composed of 14 subunits. The complex is composed of a catalytic core of 3 subunits MT-CO1, MT-CO2 and MT-CO3, encoded in the mitochondrial DNA, and 11 supernumerary subunits COX4I, COX5A, COX5B, COX6A, COX6B, COX6C, COX7A, COX7B, COX7C, COX8 and NDUFA4, which are encoded in the nuclear genome. The complex exists as a monomer or a dimer and forms supercomplexes (SCs) in the inner mitochondrial membrane with NADH-ubiquinone oxidoreductase (complex I, CI) and ubiquinol-cytochrome c oxidoreductase (cytochrome b-c1 complex, complex III, CIII), resulting in different assemblies (supercomplex SCI(1)III(2)IV(1) and megacomplex MCI(2)III(2)IV(2)).

The protein resides in the mitochondrion inner membrane. It catalyses the reaction 4 Fe(II)-[cytochrome c] + O2 + 8 H(+)(in) = 4 Fe(III)-[cytochrome c] + 2 H2O + 4 H(+)(out). In terms of biological role, component of the cytochrome c oxidase, the last enzyme in the mitochondrial electron transport chain which drives oxidative phosphorylation. The respiratory chain contains 3 multisubunit complexes succinate dehydrogenase (complex II, CII), ubiquinol-cytochrome c oxidoreductase (cytochrome b-c1 complex, complex III, CIII) and cytochrome c oxidase (complex IV, CIV), that cooperate to transfer electrons derived from NADH and succinate to molecular oxygen, creating an electrochemical gradient over the inner membrane that drives transmembrane transport and the ATP synthase. Cytochrome c oxidase is the component of the respiratory chain that catalyzes the reduction of oxygen to water. Electrons originating from reduced cytochrome c in the intermembrane space (IMS) are transferred via the dinuclear copper A center (CU(A)) of subunit 2 and heme A of subunit 1 to the active site in subunit 1, a binuclear center (BNC) formed by heme A3 and copper B (CU(B)). The BNC reduces molecular oxygen to 2 water molecules using 4 electrons from cytochrome c in the IMS and 4 protons from the mitochondrial matrix. The chain is Cytochrome c oxidase subunit 3 (MT-CO3) from Anas platyrhynchos (Mallard).